The following is a 164-amino-acid chain: Small ribosomal subunit protein uS3m (164 aa).

The N-terminal 23 residues, 1-23 (MLRSIQHVEALSSRQISTTSMLL), are a transit peptide targeting the mitochondrion.

This sequence belongs to the universal ribosomal protein uS3 family. Component of the mitochondrial ribosome small subunit (28S) which comprises a 12S rRNA and about 30 distinct proteins.

The protein localises to the mitochondrion. The protein is Small ribosomal subunit protein uS3m (mrps-24) of Caenorhabditis elegans.